The chain runs to 310 residues: Prephenate dehydratase (310 aa).

The Prephenate dehydratase domain maps to 3–190 (RIAYLGPEGT…ARTRFVLVGL (188 aa)). Residues 204–281 (AVVLRLVNEP…VDVRYLGSWP (78 aa)) form the ACT domain.

In terms of assembly, homodimer.

The enzyme catalyses prephenate + H(+) = 3-phenylpyruvate + CO2 + H2O. The protein operates within amino-acid biosynthesis; L-phenylalanine biosynthesis; phenylpyruvate from prephenate: step 1/1. The polypeptide is Prephenate dehydratase (pheA) (Mycolicibacterium smegmatis (strain ATCC 700084 / mc(2)155) (Mycobacterium smegmatis)).